The primary structure comprises 391 residues: Histidinol-phosphate aminotransferase (391 aa).

Residue lysine 245 is modified to N6-(pyridoxal phosphate)lysine.

The protein belongs to the class-II pyridoxal-phosphate-dependent aminotransferase family. Histidinol-phosphate aminotransferase subfamily. As to quaternary structure, homodimer. Requires pyridoxal 5'-phosphate as cofactor.

The enzyme catalyses L-histidinol phosphate + 2-oxoglutarate = 3-(imidazol-4-yl)-2-oxopropyl phosphate + L-glutamate. It functions in the pathway amino-acid biosynthesis; L-histidine biosynthesis; L-histidine from 5-phospho-alpha-D-ribose 1-diphosphate: step 7/9. The chain is Histidinol-phosphate aminotransferase from Bifidobacterium adolescentis (strain ATCC 15703 / DSM 20083 / NCTC 11814 / E194a).